A 688-amino-acid polypeptide reads, in one-letter code: Glycine--tRNA ligase beta subunit (688 aa).

It belongs to the class-II aminoacyl-tRNA synthetase family. Tetramer of two alpha and two beta subunits.

It is found in the cytoplasm. The catalysed reaction is tRNA(Gly) + glycine + ATP = glycyl-tRNA(Gly) + AMP + diphosphate. This chain is Glycine--tRNA ligase beta subunit, found in Syntrophomonas wolfei subsp. wolfei (strain DSM 2245B / Goettingen).